The primary structure comprises 503 residues: Cytochrome P450 3A25 (503 aa).

A heme-binding site is contributed by cysteine 442.

Belongs to the cytochrome P450 family. It depends on heme as a cofactor.

The protein localises to the endoplasmic reticulum membrane. Its subcellular location is the microsome membrane. The catalysed reaction is an organic molecule + reduced [NADPH--hemoprotein reductase] + O2 = an alcohol + oxidized [NADPH--hemoprotein reductase] + H2O + H(+). Functionally, cytochromes P450 are a group of heme-thiolate monooxygenases. In liver microsomes, this enzyme is involved in an NADPH-dependent electron transport pathway. It oxidizes a variety of structurally unrelated compounds, including steroids, fatty acids, and xenobiotics. The chain is Cytochrome P450 3A25 (Cyp3a25) from Mus musculus (Mouse).